The primary structure comprises 217 residues: Kunitz-type trypsin inhibitor-like 2 protein (217 aa).

A signal peptide spans 1–26; sequence MKPLSPLTLSFLLFVFITTLSLAFSN. 2 disulfides stabilise this stretch: Cys-70/Cys-115 and Cys-168/Cys-175. Asn-191 carries N-linked (GlcNAc...) asparagine glycosylation.

It belongs to the protease inhibitor I3 (leguminous Kunitz-type inhibitor) family.

It localises to the secreted. Might act as a protease inhibitor involved in plant defense responses. The sequence is that of Kunitz-type trypsin inhibitor-like 2 protein (PIP20-2) from Pisum sativum (Garden pea).